The following is a 750-amino-acid chain: MPLSYQRFRRLLLLDDEAGPLEEELPRLADEDLNRRVAEDLNLGNLNVSIPWTHKVGNFTGLYSSTVPVFNPHWKPPSFPNIHLHQDIIKKCEQFVGPLTVNEKRRLKLIMPARFYPNFTKYLPLDKGIKPYYPEHLVNHYFQTRHYLHTLWKAGVLYKRVSTHSASFCGSPYSWEQELQHGAESFHQQSSGILSRPPVGSSLQSKHQQSRLGLQSQQGHLARRQQGRSWSIRARVHPTARRPFGVEPSGSGHNANLASKSASCLYQSPVRTAAYPAVSTSENHSSSGHALELHNLPPNSARSQSERPVFPCWWLQFRDSKPCSDYYLSHIVNLLEDWGPCAEHGEHHIRIPRTPARVTGGVFLVDKNPHNTAESRLVVDFSQFSRGNYRVSWPKFAVPNLQSLTNLLSSNLSWLSLDVSAAFYHLPLHPAAMPHLLVGSSGLSRYVARLSSNSRIINHQHGILQNLHDSCSRNLYVSLLLLYKTFGWKLHLYSHPIILGFRKIPMGVGLSPFLLAQFTSAICSVVRRAFPHCLAFSYMDDVVLGAKSVQHLESLFTAVTNFLLSLGIHLNPNKTKRWGYSLNFMGYVIGCWGSLPQDHIIHKIKECFRKLPVHRPIDWKVCQRIVGLLGFAAPFTQCGYPALMPLYACIQSKQAFTFSPTYKAFLCKQYLNLYPVAEQRPGLCQVFADATPTGWGLVMGHQRMRGTFLAPLPIHTAELLAACFARSRSGANILGTDNSVVLSRKYTSFP.

The segment at 1 to 177 (MPLSYQRFRR…FCGSPYSWEQ (177 aa)) is terminal protein domain (TP). The segment at 178-335 (ELQHGAESFH…YYLSHIVNLL (158 aa)) is spacer. 2 disordered regions span residues 186-229 (FHQQ…QGRS) and 279-302 (STSENHSSSGHALELHNLPPNSAR). Positions 210–220 (SRLGLQSQQGH) are enriched in low complexity. Residues 279-288 (STSENHSSSG) show a composition bias toward polar residues. The tract at residues 336–679 (EDWGPCAEHG…YLNLYPVAEQ (344 aa)) is polymerase/reverse transcriptase domain (RT). Residues 346-589 (EHHIRIPRTP…YSLNFMGYVI (244 aa)) enclose the Reverse transcriptase domain. Mg(2+) contacts are provided by Asp-418, Asp-540, and Asp-541. The rnaseH domain (RH) stretch occupies residues 680 to 750 (RPGLCQVFAD…VLSRKYTSFP (71 aa)).

It belongs to the hepadnaviridae P protein family.

The catalysed reaction is DNA(n) + a 2'-deoxyribonucleoside 5'-triphosphate = DNA(n+1) + diphosphate. The enzyme catalyses Endonucleolytic cleavage to 5'-phosphomonoester.. Its activity is regulated as follows. Activated by host HSP70 and HSP40 in vitro to be able to bind the epsilon loop of the pgRNA. Because deletion of the RNase H region renders the protein partly chaperone-independent, the chaperones may be needed indirectly to relieve occlusion of the RNA-binding site by this domain. Inhibited by several reverse-transcriptase inhibitors: Lamivudine, Adefovir and Entecavir. Functionally, multifunctional enzyme that converts the viral RNA genome into dsDNA in viral cytoplasmic capsids. This enzyme displays a DNA polymerase activity that can copy either DNA or RNA templates, and a ribonuclease H (RNase H) activity that cleaves the RNA strand of RNA-DNA heteroduplexes in a partially processive 3'- to 5'-endonucleasic mode. Neo-synthesized pregenomic RNA (pgRNA) are encapsidated together with the P protein, and reverse-transcribed inside the nucleocapsid. Initiation of reverse-transcription occurs first by binding the epsilon loop on the pgRNA genome, and is initiated by protein priming, thereby the 5'-end of (-)DNA is covalently linked to P protein. Partial (+)DNA is synthesized from the (-)DNA template and generates the relaxed circular DNA (RC-DNA) genome. After budding and infection, the RC-DNA migrates in the nucleus, and is converted into a plasmid-like covalently closed circular DNA (cccDNA). The activity of P protein does not seem to be necessary for cccDNA generation, and is presumably released from (+)DNA by host nuclear DNA repair machinery. The chain is Protein P (P) from Hepatitis B virus genotype D subtype adw (isolate United Kingdom/adyw/1979) (HBV-D).